A 224-amino-acid chain; its full sequence is Phosphoribosylformylglycinamidine synthase subunit PurQ (224 aa).

Residues 4–224 form the Glutamine amidotransferase type-1 domain; the sequence is RIGIITFPGT…YSVLDGVLAG (221 aa). The active-site Nucleophile is Cys-87. Active-site residues include His-195 and Glu-197.

Part of the FGAM synthase complex composed of 1 PurL, 1 PurQ and 2 PurS subunits.

The protein resides in the cytoplasm. The catalysed reaction is N(2)-formyl-N(1)-(5-phospho-beta-D-ribosyl)glycinamide + L-glutamine + ATP + H2O = 2-formamido-N(1)-(5-O-phospho-beta-D-ribosyl)acetamidine + L-glutamate + ADP + phosphate + H(+). It carries out the reaction L-glutamine + H2O = L-glutamate + NH4(+). It participates in purine metabolism; IMP biosynthesis via de novo pathway; 5-amino-1-(5-phospho-D-ribosyl)imidazole from N(2)-formyl-N(1)-(5-phospho-D-ribosyl)glycinamide: step 1/2. Functionally, part of the phosphoribosylformylglycinamidine synthase complex involved in the purines biosynthetic pathway. Catalyzes the ATP-dependent conversion of formylglycinamide ribonucleotide (FGAR) and glutamine to yield formylglycinamidine ribonucleotide (FGAM) and glutamate. The FGAM synthase complex is composed of three subunits. PurQ produces an ammonia molecule by converting glutamine to glutamate. PurL transfers the ammonia molecule to FGAR to form FGAM in an ATP-dependent manner. PurS interacts with PurQ and PurL and is thought to assist in the transfer of the ammonia molecule from PurQ to PurL. The protein is Phosphoribosylformylglycinamidine synthase subunit PurQ of Mycolicibacterium paratuberculosis (strain ATCC BAA-968 / K-10) (Mycobacterium paratuberculosis).